The sequence spans 318 residues: Aspartate carbamoyltransferase catalytic subunit (318 aa).

Residues Arg-58 and Thr-59 each coordinate carbamoyl phosphate. Lys-86 lines the L-aspartate pocket. Carbamoyl phosphate-binding residues include Arg-108, His-141, and Gln-144. The L-aspartate site is built by Arg-174 and Arg-226. Residues Gly-270 and Pro-271 each coordinate carbamoyl phosphate.

It belongs to the aspartate/ornithine carbamoyltransferase superfamily. ATCase family. As to quaternary structure, heterododecamer (2C3:3R2) of six catalytic PyrB chains organized as two trimers (C3), and six regulatory PyrI chains organized as three dimers (R2).

The catalysed reaction is carbamoyl phosphate + L-aspartate = N-carbamoyl-L-aspartate + phosphate + H(+). Its pathway is pyrimidine metabolism; UMP biosynthesis via de novo pathway; (S)-dihydroorotate from bicarbonate: step 2/3. Functionally, catalyzes the condensation of carbamoyl phosphate and aspartate to form carbamoyl aspartate and inorganic phosphate, the committed step in the de novo pyrimidine nucleotide biosynthesis pathway. The protein is Aspartate carbamoyltransferase catalytic subunit of Lactobacillus delbrueckii subsp. bulgaricus (strain ATCC 11842 / DSM 20081 / BCRC 10696 / JCM 1002 / NBRC 13953 / NCIMB 11778 / NCTC 12712 / WDCM 00102 / Lb 14).